Consider the following 189-residue polypeptide: MDDKKTWSTVTLRTFNQLVTSSLIGYSKKMDSMNHKMEGNAGHDHSDMHMGDGDDTCSMNMLFSWSYKNTCVVFEWWHIKTLPGLILSCLAIFGLAYLYEYLKYCVHKRQLSQRVLLPNRSLTKINQADKVSNSILYGLQVGFSFMLMLVFMTYNGWLMLAVVCGAIWGNYSWCTSYSPEIDDSSLACH.

The Cytoplasmic portion of the chain corresponds to 1–81 (MDDKKTWSTV…VVFEWWHIKT (81 aa)). The helical transmembrane segment at 82–102 (LPGLILSCLAIFGLAYLYEYL) threads the bilayer. Topologically, residues 103 to 142 (KYCVHKRQLSQRVLLPNRSLTKINQADKVSNSILYGLQVG) are vacuolar. A helical membrane pass occupies residues 143-163 (FSFMLMLVFMTYNGWLMLAVV). Residues 164–189 (CGAIWGNYSWCTSYSPEIDDSSLACH) are Cytoplasmic-facing.

The protein belongs to the copper transporter (Ctr) (TC 1.A.56) family. SLC31A subfamily. Homomultimer.

Its subcellular location is the vacuole membrane. Its function is as follows. Provides bioavailable copper via mobilization of vacuolar copper stores and export to the cytoplasm. The chain is Copper transport protein CTR2 (CTR2) from Saccharomyces cerevisiae (strain ATCC 204508 / S288c) (Baker's yeast).